We begin with the raw amino-acid sequence, 282 residues long: MSADTLQIAYSPCPNDTFVFDALAHGRVPGAPALDVTFADIDITNGMAERGELDVLKVSYAVLPYVLDDWALLPCGGALGRGCGPLVLTREADADLRGRTVAVPSETSTAYLLFRLWAADTVPGGVGEIVVMPFHEIMPAVRDGKVDAGLVIHEARFTYQNYGLHKLADMGEHWEHTTGLPIPLGAIIARRSLGAPALTRLADAVRASVRAAWDDPEASRPYVMEHAQEMDPAVADQHIGLYVNEFTADLGEDGYAAIRGLLTRAAAEGLVPALGPDALAFP.

Substrate is bound by residues 57 to 59 (KVS) and 109 to 110 (TA). Residue histidine 153 is the Proton acceptor of the active site.

This sequence belongs to the MqnA/MqnD family. MqnD subfamily.

It carries out the reaction cyclic dehypoxanthinylfutalosinate = 1,4-dihydroxy-6-naphthoate + dihydroxyacetone. It participates in quinol/quinone metabolism; menaquinone biosynthesis. Functionally, catalyzes the conversion of cyclic dehypoxanthine futalosine (cyclic DHFL) into 1,4-dihydroxy-6-naphthoate, a step in the biosynthesis of menaquinone (MK, vitamin K2). In Streptomyces coelicolor (strain ATCC BAA-471 / A3(2) / M145), this protein is 1,4-dihydroxy-6-naphtoate synthase.